The sequence spans 443 residues: Thymidine phosphorylase (443 aa).

This sequence belongs to the thymidine/pyrimidine-nucleoside phosphorylase family. In terms of assembly, homodimer.

The enzyme catalyses thymidine + phosphate = 2-deoxy-alpha-D-ribose 1-phosphate + thymine. Its pathway is pyrimidine metabolism; dTMP biosynthesis via salvage pathway; dTMP from thymine: step 1/2. Its function is as follows. The enzymes which catalyze the reversible phosphorolysis of pyrimidine nucleosides are involved in the degradation of these compounds and in their utilization as carbon and energy sources, or in the rescue of pyrimidine bases for nucleotide synthesis. The chain is Thymidine phosphorylase from Shewanella amazonensis (strain ATCC BAA-1098 / SB2B).